The following is a 329-amino-acid chain: Endo-beta-N-acetylglucosaminidase F3 (329 aa).

The segment at residues 1-39 is a signal peptide (or 40, or 41); it reads MKKIFFAQCSILLLMLGSCSKMTEDMTPESVNKEASVKS. Residues 48-329 form the GH18 domain; it reads GVCIAYYITD…ANAVRDAVKN (282 aa). O-linked (Man...) threonine glycosylation occurs at Thr-88. Glu-167 (proton donor) is an active-site residue.

Belongs to the glycosyl hydrolase 18 family. Monomer. In terms of processing, carbohydrate at Thr-88 consists of (2-OMe)Man1-4GlcNAcU1-4GlcU1-4Glc1-4(2-OMe)GlcU1-4[(2-OMe)Rham1-2]Man.

The protein resides in the secreted. It carries out the reaction an N(4)-(oligosaccharide-(1-&gt;3)-[oligosaccharide-(1-&gt;6)]-beta-D-Man-(1-&gt;4)-beta-D-GlcNAc-(1-&gt;4)-alpha-D-GlcNAc)-L-asparaginyl-[protein] + H2O = an oligosaccharide-(1-&gt;3)-[oligosaccharide-(1-&gt;6)]-beta-D-Man-(1-&gt;4)-D-GlcNAc + N(4)-(N-acetyl-beta-D-glucosaminyl)-L-asparaginyl-[protein]. Functionally, endohydrolysis of the di-N-acetylchitobiosyl unit in high-mannose glycopeptides and glycoproteins. Hydrolyzes bi- and triantennary glycans. The presence of a core-bound fucose greatly augments endo F3 activity on biantennary and, presumably, triantennary oligosaccharides. In Elizabethkingia meningoseptica (Chryseobacterium meningosepticum), this protein is Endo-beta-N-acetylglucosaminidase F3 (endOF3).